We begin with the raw amino-acid sequence, 767 residues long: 5-methyltetrahydropteroyltriglutamate--homocysteine methyltransferase (767 aa).

Residues 17–20 and K117 each bind 5-methyltetrahydropteroyltri-L-glutamate; that span reads RELK. Residues 441-443 and E494 contribute to the L-homocysteine site; that span reads IGS. L-methionine contacts are provided by residues 441–443 and E494; that span reads IGS. Residues 525 to 526 and W571 contribute to the 5-methyltetrahydropteroyltri-L-glutamate site; that span reads RC. Residue D609 participates in L-homocysteine binding. An L-methionine-binding site is contributed by D609. 5-methyltetrahydropteroyltri-L-glutamate is bound at residue E615. Residues H652, C654, and E676 each contribute to the Zn(2+) site. H705 acts as the Proton donor in catalysis. A Zn(2+)-binding site is contributed by C737.

This sequence belongs to the vitamin-B12 independent methionine synthase family. Requires Zn(2+) as cofactor.

It carries out the reaction 5-methyltetrahydropteroyltri-L-glutamate + L-homocysteine = tetrahydropteroyltri-L-glutamate + L-methionine. It functions in the pathway amino-acid biosynthesis; L-methionine biosynthesis via de novo pathway; L-methionine from L-homocysteine (MetE route): step 1/1. Its function is as follows. Catalyzes the transfer of a methyl group from 5-methyltetrahydrofolate to homocysteine resulting in methionine formation. This Bifidobacterium longum (strain NCC 2705) protein is 5-methyltetrahydropteroyltriglutamate--homocysteine methyltransferase.